We begin with the raw amino-acid sequence, 102 residues long: MSVMKPCLMTIAILMILAQKTPGGLFRSHNGKSREPWNPCELYQGMCRNACREYEIQYLTCPNDQKCCLKLSVKITSSKNVKEDYDSNSNLSVTNSSSYSHI.

Positions 1–23 (MSVMKPCLMTIAILMILAQKTPG) are cleaved as a signal peptide. 3 disulfide bridges follow: C40–C67, C47–C61, and C51–C68. A disordered region spans residues 83 to 102 (EDYDSNSNLSVTNSSSYSHI). The segment covering 87–102 (SNSNLSVTNSSSYSHI) has biased composition (low complexity).

The protein belongs to the beta-defensin family.

It localises to the secreted. In terms of biological role, has antibacterial activity. This is Beta-defensin 116 (DEFB116) from Homo sapiens (Human).